The following is a 364-amino-acid chain: Aminomethyltransferase (364 aa).

Belongs to the GcvT family. As to quaternary structure, the glycine cleavage system is composed of four proteins: P, T, L and H.

The enzyme catalyses N(6)-[(R)-S(8)-aminomethyldihydrolipoyl]-L-lysyl-[protein] + (6S)-5,6,7,8-tetrahydrofolate = N(6)-[(R)-dihydrolipoyl]-L-lysyl-[protein] + (6R)-5,10-methylene-5,6,7,8-tetrahydrofolate + NH4(+). Its function is as follows. The glycine cleavage system catalyzes the degradation of glycine. This chain is Aminomethyltransferase, found in Klebsiella pneumoniae subsp. pneumoniae (strain ATCC 700721 / MGH 78578).